We begin with the raw amino-acid sequence, 450 residues long: Na(+)/H(+) antiporter NhaA 1 (450 aa).

The next 11 membrane-spanning stretches (helical) occupy residues S35–A55, L79–I99, L117–W137, I143–V163, A173–F193, I198–Y218, P224–H244, L320–N340, I356–L376, V392–L412, and V423–L443.

It belongs to the NhaA Na(+)/H(+) (TC 2.A.33) antiporter family.

The protein localises to the cell inner membrane. The enzyme catalyses Na(+)(in) + 2 H(+)(out) = Na(+)(out) + 2 H(+)(in). In terms of biological role, na(+)/H(+) antiporter that extrudes sodium in exchange for external protons. The protein is Na(+)/H(+) antiporter NhaA 1 of Shewanella denitrificans (strain OS217 / ATCC BAA-1090 / DSM 15013).